Consider the following 120-residue polypeptide: MFLLHEYDIFWTFLIIASLIPILAFWISGLLAPISEGPEKLSSYESGIEPMGGAWLQFRIRYYMFALVFVVFDVETVFLYPWAMSFDVLGVSVFIEAFIFVLILVVGLVYAWRKGALEWS.

The next 3 membrane-spanning stretches (helical) occupy residues 9–29 (IFWTFLIIASLIPILAFWISG), 64–84 (MFALVFVVFDVETVFLYPWAM), and 88–108 (VLGVSVFIEAFIFVLILVVGL).

The protein belongs to the complex I subunit 3 family. In terms of assembly, NDH is composed of at least 16 different subunits, 5 of which are encoded in the nucleus.

The protein localises to the plastid. It is found in the chloroplast thylakoid membrane. It carries out the reaction a plastoquinone + NADH + (n+1) H(+)(in) = a plastoquinol + NAD(+) + n H(+)(out). It catalyses the reaction a plastoquinone + NADPH + (n+1) H(+)(in) = a plastoquinol + NADP(+) + n H(+)(out). Its function is as follows. NDH shuttles electrons from NAD(P)H:plastoquinone, via FMN and iron-sulfur (Fe-S) centers, to quinones in the photosynthetic chain and possibly in a chloroplast respiratory chain. The immediate electron acceptor for the enzyme in this species is believed to be plastoquinone. Couples the redox reaction to proton translocation, and thus conserves the redox energy in a proton gradient. The protein is NAD(P)H-quinone oxidoreductase subunit 3, chloroplastic of Brachypodium distachyon (Purple false brome).